The chain runs to 414 residues: Histidine--tRNA ligase (414 aa).

This sequence belongs to the class-II aminoacyl-tRNA synthetase family. As to quaternary structure, homodimer.

The protein localises to the cytoplasm. The catalysed reaction is tRNA(His) + L-histidine + ATP = L-histidyl-tRNA(His) + AMP + diphosphate + H(+). The polypeptide is Histidine--tRNA ligase (Anaeromyxobacter sp. (strain K)).